The primary structure comprises 48 residues: Large ribosomal subunit protein bL36c (48 aa).

The protein belongs to the bacterial ribosomal protein bL36 family.

The protein resides in the plastid. It localises to the chloroplast. The sequence is that of Large ribosomal subunit protein bL36c from Rhodomonas salina (Cryptomonas salina).